A 974-amino-acid polypeptide reads, in one-letter code: Translation initiation factor IF-2 (974 aa).

Residues 31–376 are disordered; that stretch reads FVKSASSTVE…APAVGGVRLP (346 aa). Residues 52–68 show a composition bias toward low complexity; the sequence is PSAKSADSAARPAAKPG. A compositionally biased stretch (pro residues) spans 83–96; that stretch reads GPRPGPKPAAPAPA. The segment covering 97 to 133 has biased composition (low complexity); it reads APAAAAPAATPAAQAPAPAAPAASTATPAAPASNAPK. Over residues 134–147 the composition is skewed to pro residues; it reads PGRPTPAAPAPAAP. Composition is skewed to low complexity over residues 148–166 and 179–191; these read AAPAAPAAASTPAAPSTGA and RVGNNPYSSAPAE. Composition is skewed to pro residues over residues 195–210 and 253–266; these read PRPAPGAPRPGAPRPA and RPSPGSMPPRPNPG. Positions 267 to 277 are enriched in low complexity; sequence AMPARSARPAP. Residues 279–332 are compositionally biased toward gly residues; it reads GRPGRPGGAPGGRPGGGGGGYRGGGAPGAGAGAPGGGAPAGGFRGRPGGGGRPG. Basic residues predominate over residues 349–358; it reads RRGRKSKRQK. In terms of domain architecture, tr-type G spans 470-641; that stretch reads SRPPVVTVMG…AVLLTADAAL (172 aa). The segment at 479–486 is G1; the sequence is GHVDHGKT. 479-486 contacts GTP; that stretch reads GHVDHGKT. Residues 504-508 are G2; the sequence is GITQH. The interval 529–532 is G3; that stretch reads DTPG. GTP is bound by residues 529 to 533 and 583 to 586; these read DTPGH and NKID. Residues 583–586 form a G4 region; that stretch reads NKID. A G5 region spans residues 619–621; the sequence is SAK.

This sequence belongs to the TRAFAC class translation factor GTPase superfamily. Classic translation factor GTPase family. IF-2 subfamily.

The protein localises to the cytoplasm. One of the essential components for the initiation of protein synthesis. Protects formylmethionyl-tRNA from spontaneous hydrolysis and promotes its binding to the 30S ribosomal subunits. Also involved in the hydrolysis of GTP during the formation of the 70S ribosomal complex. This Rhodococcus opacus (strain B4) protein is Translation initiation factor IF-2.